Reading from the N-terminus, the 171-residue chain is Crossover junction endodeoxyribonuclease RuvC (171 aa).

Catalysis depends on residues D11, E71, and D143. Mg(2+)-binding residues include D11, E71, and D143.

The protein belongs to the RuvC family. In terms of assembly, homodimer which binds Holliday junction (HJ) DNA. The HJ becomes 2-fold symmetrical on binding to RuvC with unstacked arms; it has a different conformation from HJ DNA in complex with RuvA. In the full resolvosome a probable DNA-RuvA(4)-RuvB(12)-RuvC(2) complex forms which resolves the HJ. It depends on Mg(2+) as a cofactor.

Its subcellular location is the cytoplasm. It catalyses the reaction Endonucleolytic cleavage at a junction such as a reciprocal single-stranded crossover between two homologous DNA duplexes (Holliday junction).. Its function is as follows. The RuvA-RuvB-RuvC complex processes Holliday junction (HJ) DNA during genetic recombination and DNA repair. Endonuclease that resolves HJ intermediates. Cleaves cruciform DNA by making single-stranded nicks across the HJ at symmetrical positions within the homologous arms, yielding a 5'-phosphate and a 3'-hydroxyl group; requires a central core of homology in the junction. The consensus cleavage sequence is 5'-(A/T)TT(C/G)-3'. Cleavage occurs on the 3'-side of the TT dinucleotide at the point of strand exchange. HJ branch migration catalyzed by RuvA-RuvB allows RuvC to scan DNA until it finds its consensus sequence, where it cleaves and resolves the cruciform DNA. The chain is Crossover junction endodeoxyribonuclease RuvC from Chelativorans sp. (strain BNC1).